A 2286-amino-acid chain; its full sequence is DNA polymerase epsilon catalytic subunit A (2286 aa).

Positions 1–30 (MSLRSGGRRRADPGADGEASRDDGATSSVS) are disordered. The span at 9–24 (RRADPGADGEASRDDG) shows a compositional bias: basic and acidic residues. 4 positions are modified to phosphoserine: serine 1184, serine 1297, serine 1317, and serine 1940. The segment at 1939–1969 (DSQKAGGAEDEQENEDDEEERDGEEEEEAEE) is disordered. Positions 1946–1969 (AEDEQENEDDEEERDGEEEEEAEE) are enriched in acidic residues. Positions 2158, 2161, 2187, and 2190 each coordinate Zn(2+). The CysA-type zinc-finger motif lies at 2158 to 2190 (CRSCNFCRDLDLCKDSSFSEDGAVLPQWLCSNC). [4Fe-4S] cluster contacts are provided by cysteine 2221, cysteine 2224, cysteine 2236, and cysteine 2238. A CysB motif motif is present at residues 2221–2238 (CLKCRGVKETSMPVYCSC).

Belongs to the DNA polymerase type-B family. Component of the DNA polymerase epsilon complex consisting of four subunits: the catalytic subunit POLE and the accessory subunits POLE2, POLE3 and POLE4. Interacts with RAD17 and TOPBP1.

It is found in the nucleus. It carries out the reaction DNA(n) + a 2'-deoxyribonucleoside 5'-triphosphate = DNA(n+1) + diphosphate. Its function is as follows. Catalytic component of the DNA polymerase epsilon complex. Participates in chromosomal DNA replication. Required during synthesis of the leading DNA strands at the replication fork, binds at/or near replication origins and moves along DNA with the replication fork. Has 3'-5' proofreading exonuclease activity that corrects errors arising during DNA replication. Involved in DNA synthesis during DNA repair. Along with DNA polymerase POLD1 and DNA polymerase POLK, has a role in excision repair (NER) synthesis following UV irradiation. This chain is DNA polymerase epsilon catalytic subunit A, found in Homo sapiens (Human).